The primary structure comprises 961 residues: Ubiquitin carboxyl-terminal hydrolase 4 (961 aa).

One can recognise a DUSP domain in the interval 11–122; it reads PDVETQKTEL…GQQPIVRKVV (112 aa). The segment at 27–216 is necessary for interaction with SART3; the sequence is TLQRGAQWYL…LYQGQVLVIE (190 aa). The Nuclear export signal signature appears at 133-141; that stretch reads VEVYLLELK. In terms of domain architecture, Ubiquitin-like 1 spans 142–226; sequence LCENSDPTNV…PQNEDGTWPR (85 aa). The segment at 219-257 is disordered; the sequence is NEDGTWPRQTLQSKSSTAPSRNFTTSSKPSASPYSSMSA. Polar residues predominate over residues 225-243; sequence PRQTLQSKSSTAPSRNFTT. Residues 229–295 are required for USP4 activation by providing conformational flexibility between the DUSP and catalytic domains; that stretch reads LQSKSSTAPS…SYNCQEPPSP (67 aa). Positions 244 to 257 are enriched in low complexity; that stretch reads SSKPSASPYSSMSA. Residues 302-921 form the USP domain; the sequence is CGLGNLGNTC…AAYVLFYQRR (620 aa). Residue Cys311 is part of the active site. The segment at 384-386 is regulates ubiquitin dissociation; the sequence is PQF. Positions 405–407 are necessary for interaction with RBL2; it reads LHE. Position 445 is a phosphoserine (Ser445). Positions 459–463 are necessary for interaction with RB1 and RBL2; the sequence is LVCPE. Positions 461 and 464 each coordinate Zn(2+). In terms of domain architecture, Ubiquitin-like 2 spans 483–571; that stretch reads LKKDRIMEVF…IFVYEICTTP (89 aa). The interval 485–773 is interacts with DUSP and ubiquitin-like 1 domains and is required for USP4 activation; it reads KDRIMEVFLV…SQPQKKKKAA (289 aa). The segment at 641-700 is disordered; the sequence is SSPLEPGACNGSRGSYEGDEEEMDHQEEGKEQLSEVEESGEDSQGGDPTETTQKAKGPPR. Phosphoserine occurs at positions 655, 674, and 679. Residues 765–770 carry the Nuclear localization signal motif; sequence QPQKKK. Residues Cys797 and Cys800 each contribute to the Zn(2+) site. Residue His879 is part of the active site. The tract at residues 924 to 961 is disordered; the sequence is ECPSTSSPVSFPGSDGGAKLSSSQQDLGEEEAYTMDTN. Positions 950 to 961 are enriched in acidic residues; sequence LGEEEAYTMDTN.

Belongs to the peptidase C19 family. USP4 subfamily. As to quaternary structure, interacts with RB1 (both dephosphorylated and hypophosphorylated forms). Interacts with RBL1 and RBL2. Interacts with ADORA2A (via cytoplasmic C-terminus); the interaction is direct. Interacts with SART3; recruits USP4 to its substrate PRPF3. Phosphorylated at Ser-445 by PKB/AKT1 in response to EGF stimulus, promoting its ability deubiquitinate RHEB. Post-translationally, monoubiquitinated by TRIM21. Ubiquitination does not lead to its proteasomal degradation. Autodeubiquitinated. In terms of tissue distribution, expressed in hippocampus and striatum (at protein level).

The protein resides in the cytoplasm. It is found in the nucleus. The enzyme catalyses Thiol-dependent hydrolysis of ester, thioester, amide, peptide and isopeptide bonds formed by the C-terminal Gly of ubiquitin (a 76-residue protein attached to proteins as an intracellular targeting signal).. The completion of the deubiquitinase reaction is mediated by the DUSP and ubiquitin-like 1 domains which promotes the release of ubiquitin from the catalytic site enabling subsequent reactions to occur. In terms of biological role, deubiquitinating enzyme that removes conjugated ubiquitin from target proteins. Deubiquitinates PDPK1. Deubiquitinates TRIM21. Deubiquitinates receptor ADORA2A which increases the amount of functional receptor at the cell surface. Deubiquitinates HAS2. Deubiquitinates RHEB in response to EGF signaling, promoting mTORC1 signaling. May regulate mRNA splicing through deubiquitination of the U4 spliceosomal protein PRPF3. This may prevent its recognition by the U5 component PRPF8 thereby destabilizing interactions within the U4/U6.U5 snRNP. May also play a role in the regulation of quality control in the ER. This chain is Ubiquitin carboxyl-terminal hydrolase 4 (Usp4), found in Rattus norvegicus (Rat).